A 1977-amino-acid polypeptide reads, in one-letter code: Protein rotatin homolog (1977 aa).

The tract at residues 141-166 is disordered; it reads SVSSLSSNDIPSQATESADSSSNQIY.

Belongs to the rotatin family. In terms of assembly, interacts with Rcd4;this complex is recruited to daughter centrioles before their conversion to centrosomes.

It is found in the cytoplasm. The protein localises to the cytoskeleton. It localises to the microtubule organizing center. The protein resides in the centrosome. Its subcellular location is the centriole. Participes in the structural integrity of both centrioles and basal bodies and in centriole cohesion. Participates in the later stages of centriole assembly through the interaction with Rcd4 leading to the centriole to centrosome conversion. This Drosophila melanogaster (Fruit fly) protein is Protein rotatin homolog.